The following is a 276-amino-acid chain: Large ribosomal subunit protein uL2 (276 aa).

The segment at 219 to 276 is disordered; sequence TVRGSAMNPNDHPHGGGEGRSPIGRPSPVTPWGKPALGYKTRKKNKHSDKFIVTGRKR.

It belongs to the universal ribosomal protein uL2 family. Part of the 50S ribosomal subunit. Forms a bridge to the 30S subunit in the 70S ribosome.

Its function is as follows. One of the primary rRNA binding proteins. Required for association of the 30S and 50S subunits to form the 70S ribosome, for tRNA binding and peptide bond formation. It has been suggested to have peptidyltransferase activity; this is somewhat controversial. Makes several contacts with the 16S rRNA in the 70S ribosome. The chain is Large ribosomal subunit protein uL2 from Alkaliphilus metalliredigens (strain QYMF).